The primary structure comprises 320 residues: Aminoacyl tRNA synthase complex-interacting multifunctional protein 2 (320 aa).

Ser36 is modified (phosphoserine). The interaction with PRKN stretch occupies residues 82 to 162 (TPDADLDVTN…HTHSAVRSVP (81 aa)). The interval 162 to 225 (PANLLQCFGE…FLFSLFGQKQ (64 aa)) is interaction with TP53. A GST C-terminal domain is found at 220–317 (LFGQKQDAVN…NLAPFHTALK (98 aa)).

As to quaternary structure, part of the multisynthetase complex (MSC), a multisubunit complex that groups tRNA ligases for Arg (RARS1), Asp (DARS1), Gln (QARS1), Ile (IARS1), Leu (LARS1), Lys (KARS1), Met (MARS1) the bifunctional ligase for Glu and Pro (EPRS1) and the auxiliary subunits AIMP1/p43, AIMP2/p38 and EEF1E1/p18. Interacts (via N-terminus) with KARS1. Interacts with EPRS1. Forms a linear complex that contains MARS1, EEF1E1, EPRS1 and AIMP2 that is at the core of the multisubunit complex. Binds FUBP1 (via C-terminus). Interacts in both its unphosphorylated and phosphorylated forms with p53/TP53 (via N-terminus) in the nucleus following UV irradiation. Interacts (via N-terminus) with PRKN/parkin (via first RING-type domain). Interacts with TARS3. In terms of processing, phosphorylated on serine residues in response to UV irradiation. Post-translationally, ubiquitinated by PRKN, leading to its degradation by the proteasome.

The protein localises to the cytoplasm. It localises to the cytosol. It is found in the nucleus. In terms of biological role, required for assembly and stability of the aminoacyl-tRNA synthase complex. Mediates ubiquitination and degradation of FUBP1, a transcriptional activator of MYC, leading to MYC down-regulation which is required for aveolar type II cell differentiation. Blocks MDM2-mediated ubiquitination and degradation of p53/TP53. Functions as a proapoptotic factor. The polypeptide is Aminoacyl tRNA synthase complex-interacting multifunctional protein 2 (AIMP2) (Bos taurus (Bovine)).